A 242-amino-acid polypeptide reads, in one-letter code: Interleukin-34 (242 aa).

The first 20 residues, 1 to 20 (MPRGFTWLRYLGIFLGVALG), serve as a signal peptide directing secretion. An N-linked (GlcNAc...) asparagine glycan is attached at Asn-76. The disordered stretch occupies residues 210 to 242 (TQLYPPPPWSPSSPPHSTGSVRPVRAQGEGLLP). The segment covering 213 to 223 (YPPPPWSPSSP) has biased composition (pro residues).

It belongs to the IL-34 family. Homodimer. Interacts with CSF1R. Detected in the sinusoidal epithelium in the red pulp of spleen (at protein level). Predominantly expressed in spleen. Also detected in a range of other tissues including heart, brain, lung, liver, kidney, thymus, testis, ovary, small intestine, prostate and colon.

The protein resides in the secreted. In terms of biological role, cytokine that promotes the proliferation, survival and differentiation of monocytes and macrophages. Promotes the release of pro-inflammatory chemokines, and thereby plays an important role in innate immunity and in inflammatory processes. Plays an important role in the regulation of osteoclast proliferation and differentiation, and in the regulation of bone resorption. Signaling via CSF1R and its downstream effectors stimulates phosphorylation of MAPK1/ERK2 AND MAPK3/ERK1. In Homo sapiens (Human), this protein is Interleukin-34 (IL34).